The primary structure comprises 376 residues: Response regulator aspartate phosphatase H (376 aa).

TPR repeat units lie at residues 99 to 132, 139 to 172, 180 to 213, 220 to 253, 259 to 292, and 334 to 367; these read YYSL…LPFV, AEFH…YQNH, IQSL…AMDI, AISL…SREK, PKVL…ITAR, and EACA…QEDI.

This sequence belongs to the Rap family. As to quaternary structure, homodimer. Interacts with phosphorylated Spo0F. Each RapH protomer is bound to a monomer of Spo0F, forming a heterotetrameric complex. May also interact with non-phosphorylated Spo0F to inhibit the sporulation phosphorelay. Interacts with the C-terminal DNA-binding region of ComA. Does not interact with DegU.

It localises to the cytoplasm. Both activities are inhibited by RapH. In terms of biological role, dual specificity regulatory protein that can control both sporulation and competence by acting on two distinct response regulators: Spo0F and ComA, respectively. Is involved in the temporal separation of competence and sporulation. Acts as a phosphatase that specifically dephosphorylates the sporulation initiation phosphotransferase Spo0F and inhibits its activity. RapH can also antagonize sporulation by sterically blocking phosphoryl transfer to and from Spo0F. In addition, inhibits the activity of ComA, a transcriptional factor that regulates the development of genetic competence. Acts by binding to ComA, leading to the inhibition of its DNA-binding activity. This chain is Response regulator aspartate phosphatase H (rapH), found in Bacillus subtilis (strain 168).